A 372-amino-acid chain; its full sequence is MPTTLRRAHVHRLPMRSPDDVAALEAAITQGTIDPAGIVAILGKTEGNGCVNDFTRAFAVRSLEALLGRHLATEAVRQIAMVMSGGTEGALSPHMIVFEAREVDEGHAPRAFAASLALGRARTPVLPSEHLGRMQQVAQVAAGVRAAMNDAGITDAGDVHYVQVKCPLLTMERIEAAEARGVRTAVRDTLKSMGFSRGASALGVAVALGELAMDELSDTEICTDYARYSERAATSGGVELLDHEIMVAGMSRDWTGPLAIDHGVMRDAIDIEPARAALARLGLDVPGQLPAAARGRIAAVLAKAEAAQSGKVRDVRHTMLDDSDVSSTRHARAFVGGALAGLFGFTDLFVSGGAEHQGPDGGGPVAIIVERT.

Positions 1-105 (MPTTLRRAHV…IVFEAREVDE (105 aa)) are RU A. Residues Arg56 and 84 to 85 (SG) each bind substrate. An RU B region spans residues 115-252 (SLALGRARTP…HEIMVAGMSR (138 aa)). Lys165 is a catalytic residue. Substrate is bound by residues Arg197 and 235-236 (SG). The active-site Nucleophile is the Ser235. Residues 258-372 (LAIDHGVMRD…GPVAIIVERT (115 aa)) form an RU C region. Glu305 is a binding site for Mg(2+). Residues Arg332 and 351–352 (SG) contribute to the substrate site. Mg(2+)-binding residues include Ala354, Gln357, Gly358, Pro359, and Gly362.

This sequence belongs to the cyclic amide hydrolase (CyAH) family. In terms of assembly, homotetramer.

The enzyme catalyses cyanurate + H2O = 1-carboxybiuret + H(+). The protein operates within xenobiotic degradation; atrazine degradation; biuret from cyanurate: step 1/1. Inhibited by barbituric acid. Functionally, responsible for the hydrolysis of cyanuric acid, an intermediate formed during catabolism of s-triazine based compounds in herbicides such as atrazine and polymers such as melamine. Catalyzes the hydrolytic opening of the s-triazine ring of cyanuric acid (2,4,6-trihydroxy-s-triazine) to yield carbon dioxide and carboxybiuret, which spontaneously decarboxylates to biuret. This is Cyanuric acid amidohydrolase from Bradyrhizobium sp. (strain ORS 375).